The sequence spans 217 residues: Superoxide dismutase [Mn], mitochondrial (217 aa).

The N-terminal 17 residues, 1–17 (MFVARKISPNCKPGVRG), are a transit peptide targeting the mitochondrion. Mn(2+) contacts are provided by His43, His91, Asp175, and His179.

The protein belongs to the iron/manganese superoxide dismutase family. In terms of assembly, homotetramer. Requires Mn(2+) as cofactor.

It is found in the mitochondrion matrix. The catalysed reaction is 2 superoxide + 2 H(+) = H2O2 + O2. Destroys superoxide anion radicals which are normally produced within the cells and which are toxic to biological systems. The sequence is that of Superoxide dismutase [Mn], mitochondrial (Sod2) from Drosophila melanogaster (Fruit fly).